Here is a 395-residue protein sequence, read N- to C-terminus: Lipoyl synthase, mitochondrial (395 aa).

The transit peptide at 1-14 (MISLRSISRSPAVQ) directs the protein to the mitochondrion. 7 residues coordinate [4Fe-4S] cluster: Cys-112, Cys-117, Cys-123, Cys-142, Cys-146, Cys-149, and Ser-357. Residues 127 to 346 (KKSEATATIM…RDTALQMGFL (220 aa)) form the Radical SAM core domain.

The protein belongs to the radical SAM superfamily. Lipoyl synthase family. [4Fe-4S] cluster is required as a cofactor.

It localises to the mitochondrion. The enzyme catalyses [[Fe-S] cluster scaffold protein carrying a second [4Fe-4S](2+) cluster] + N(6)-octanoyl-L-lysyl-[protein] + 2 oxidized [2Fe-2S]-[ferredoxin] + 2 S-adenosyl-L-methionine + 4 H(+) = [[Fe-S] cluster scaffold protein] + N(6)-[(R)-dihydrolipoyl]-L-lysyl-[protein] + 4 Fe(3+) + 2 hydrogen sulfide + 2 5'-deoxyadenosine + 2 L-methionine + 2 reduced [2Fe-2S]-[ferredoxin]. It participates in protein modification; protein lipoylation via endogenous pathway; protein N(6)-(lipoyl)lysine from octanoyl-[acyl-carrier-protein]: step 2/2. In terms of biological role, catalyzes the radical-mediated insertion of two sulfur atoms into the C-6 and C-8 positions of the octanoyl moiety bound to the lipoyl domains of lipoate-dependent enzymes, thereby converting the octanoylated domains into lipoylated derivatives. In Debaryomyces hansenii (strain ATCC 36239 / CBS 767 / BCRC 21394 / JCM 1990 / NBRC 0083 / IGC 2968) (Yeast), this protein is Lipoyl synthase, mitochondrial.